The following is a 196-amino-acid chain: UMP-CMP kinase (196 aa).

An ATP-binding site is contributed by 13 to 18 (GAGKGT). Serine 33 bears the Phosphoserine mark. Residues 33 to 63 (SAGELLRDERKNPDSQYGELIEKYIKEGKIV) are NMP. Arginine 39 lines the a ribonucleoside 5'-phosphate pocket. 2 positions are modified to N6-acetyllysine: lysine 43 and lysine 55. A ribonucleoside 5'-phosphate is bound at residue 61–63 (KIV). Lysine 73 participates in a covalent cross-link: Glycyl lysine isopeptide (Lys-Gly) (interchain with G-Cter in SUMO2). 93–96 (GFPR) lines the a ribonucleoside 5'-phosphate pocket. Asparagine 100 provides a ligand contact to CMP. The residue at position 106 (lysine 106) is an N6-succinyllysine. The segment at 133–143 (ERGKSSGRSDD) is LID. Arginine 134 is an ATP binding site. Arginine 140 and arginine 151 together coordinate a ribonucleoside 5'-phosphate. Lysine 179 provides a ligand contact to ATP. Serine 180 carries the phosphoserine modification.

Belongs to the adenylate kinase family. UMP-CMP kinase subfamily. Monomer. Mg(2+) is required as a cofactor.

It localises to the nucleus. Its subcellular location is the cytoplasm. It catalyses the reaction CMP + ATP = CDP + ADP. The enzyme catalyses dCMP + ATP = dCDP + ADP. It carries out the reaction UMP + ATP = UDP + ADP. The catalysed reaction is a 2'-deoxyribonucleoside 5'-diphosphate + ATP = a 2'-deoxyribonucleoside 5'-triphosphate + ADP. It catalyses the reaction a ribonucleoside 5'-diphosphate + ATP = a ribonucleoside 5'-triphosphate + ADP. In terms of biological role, catalyzes the phosphorylation of pyrimidine nucleoside monophosphates at the expense of ATP. Plays an important role in de novo pyrimidine nucleotide biosynthesis. Has preference for UMP and CMP as phosphate acceptors. Also displays broad nucleoside diphosphate kinase activity. The polypeptide is UMP-CMP kinase (Cmpk1) (Rattus norvegicus (Rat)).